Consider the following 249-residue polypeptide: Olfactory receptor 1571 (249 aa).

Residues 1–9 (LLMCNLCFA) traverse the membrane as a helical segment. The Extracellular portion of the chain corresponds to 10 to 40 (DICFTSASIPTNLVNIQTKNKVITYEGCISQ). A disulfide bridge links Cys37 with Cys119. Residues 41-60 (VYFFILFGVLDNFLLAVMAY) traverse the membrane as a helical segment. The Cytoplasmic segment spans residues 61-82 (DRYVAICHPLHYTVIMNRRLCG). A helical transmembrane segment spans residues 83–103 (LLVLGSWVTTALNSLLQSSMA). Topologically, residues 104-136 (LRLSFCTDLKIPHFVCELNQLVLLACNDTFPND) are extracellular. Residue Asn130 is glycosylated (N-linked (GlcNAc...) asparagine). The chain crosses the membrane as a helical span at residues 137–158 (MVMYFAAVLLGGGPLAGILYSY). Residues 159–180 (SKIVSSIRAISSSQGKYKAFST) are Cytoplasmic-facing. A helical transmembrane segment spans residues 181 to 200 (CASHLSVVSLFYSTLLGVYL). Residues 201–210 (SSSFTQNSHS) lie on the Extracellular side of the membrane. Residues 211 to 232 (TARASVMYSVVTPMLNPFIYSL) traverse the membrane as a helical segment. Topologically, residues 233-249 (RNKDLMGALRRLFRRKP) are cytoplasmic.

Belongs to the G-protein coupled receptor 1 family. As to expression, tongue specific.

It is found in the cell membrane. Its function is as follows. Possible taste receptor. In Rattus norvegicus (Rat), this protein is Olfactory receptor 1571 (Olr1571).